The sequence spans 245 residues: 4-hydroxy-tetrahydrodipicolinate reductase (245 aa).

NAD(+)-binding positions include 7–12 (GARGKV), 75–77 (GTT), and 102–105 (APNF). The active-site Proton donor/acceptor is the histidine 132. Histidine 133 contacts (S)-2,3,4,5-tetrahydrodipicolinate. Lysine 136 acts as the Proton donor in catalysis. A (S)-2,3,4,5-tetrahydrodipicolinate-binding site is contributed by 142–143 (GT).

This sequence belongs to the DapB family.

The protein resides in the cytoplasm. The catalysed reaction is (S)-2,3,4,5-tetrahydrodipicolinate + NAD(+) + H2O = (2S,4S)-4-hydroxy-2,3,4,5-tetrahydrodipicolinate + NADH + H(+). It carries out the reaction (S)-2,3,4,5-tetrahydrodipicolinate + NADP(+) + H2O = (2S,4S)-4-hydroxy-2,3,4,5-tetrahydrodipicolinate + NADPH + H(+). The protein operates within amino-acid biosynthesis; L-lysine biosynthesis via DAP pathway; (S)-tetrahydrodipicolinate from L-aspartate: step 4/4. Its function is as follows. Catalyzes the conversion of 4-hydroxy-tetrahydrodipicolinate (HTPA) to tetrahydrodipicolinate. In Mycolicibacterium smegmatis (strain ATCC 700084 / mc(2)155) (Mycobacterium smegmatis), this protein is 4-hydroxy-tetrahydrodipicolinate reductase.